The sequence spans 274 residues: Dermonecrotic toxin SdSicTox-betaIIB2i (274 aa).

His5 is an active-site residue. Mg(2+) is bound by residues Glu25 and Asp27. The active-site Nucleophile is His41. 2 disulfides stabilise this stretch: Cys45-Cys51 and Cys47-Cys190. A Mg(2+)-binding site is contributed by Asp85.

This sequence belongs to the arthropod phospholipase D family. Class II subfamily. It depends on Mg(2+) as a cofactor. In terms of tissue distribution, expressed by the venom gland.

It localises to the secreted. It catalyses the reaction an N-(acyl)-sphingosylphosphocholine = an N-(acyl)-sphingosyl-1,3-cyclic phosphate + choline. It carries out the reaction an N-(acyl)-sphingosylphosphoethanolamine = an N-(acyl)-sphingosyl-1,3-cyclic phosphate + ethanolamine. The enzyme catalyses a 1-acyl-sn-glycero-3-phosphocholine = a 1-acyl-sn-glycero-2,3-cyclic phosphate + choline. The catalysed reaction is a 1-acyl-sn-glycero-3-phosphoethanolamine = a 1-acyl-sn-glycero-2,3-cyclic phosphate + ethanolamine. Dermonecrotic toxins cleave the phosphodiester linkage between the phosphate and headgroup of certain phospholipids (sphingolipid and lysolipid substrates), forming an alcohol (often choline) and a cyclic phosphate. This toxin acts on sphingomyelin (SM). It may also act on ceramide phosphoethanolamine (CPE), lysophosphatidylcholine (LPC) and lysophosphatidylethanolamine (LPE), but not on lysophosphatidylserine (LPS), and lysophosphatidylglycerol (LPG). It acts by transphosphatidylation, releasing exclusively cyclic phosphate products as second products. Induces dermonecrosis, hemolysis, increased vascular permeability, edema, inflammatory response, and platelet aggregation. The sequence is that of Dermonecrotic toxin SdSicTox-betaIIB2i from Sicarius cf. damarensis (strain GJB-2008) (Six-eyed sand spider).